A 35-amino-acid polypeptide reads, in one-letter code: uncharacterized protein (35 aa).

This is an uncharacterized protein from Archaeoglobus fulgidus (strain ATCC 49558 / DSM 4304 / JCM 9628 / NBRC 100126 / VC-16).